The sequence spans 332 residues: Ribosomal RNA small subunit methyltransferase H (332 aa).

Residues 34–36 (GGH), Asp59, Phe86, Asp112, and Gln119 contribute to the S-adenosyl-L-methionine site.

It belongs to the methyltransferase superfamily. RsmH family.

The protein resides in the cytoplasm. The catalysed reaction is cytidine(1402) in 16S rRNA + S-adenosyl-L-methionine = N(4)-methylcytidine(1402) in 16S rRNA + S-adenosyl-L-homocysteine + H(+). Its function is as follows. Specifically methylates the N4 position of cytidine in position 1402 (C1402) of 16S rRNA. The sequence is that of Ribosomal RNA small subunit methyltransferase H from Chlorobium phaeobacteroides (strain BS1).